Consider the following 156-residue polypeptide: MGKQVEIFTDGSCLGNPGPGGYGVLLRYQQHEKTLSEGFYRTTNNRMELMAAIIGLETLTRPCKIVLTTDSQYVRQGITQWIHNWKKRGWRKADKSPVSNVDLWQRLDQAISRHDIDWQWVKGHSGHNENEHCDELARAAANSPTETDTGYLENRD.

In terms of domain architecture, RNase H type-1 spans 1 to 142; the sequence is MGKQVEIFTD…CDELARAAAN (142 aa). Mg(2+) is bound by residues Asp10, Glu48, Asp70, and Asp134.

Belongs to the RNase H family. Monomer. It depends on Mg(2+) as a cofactor.

The protein resides in the cytoplasm. It carries out the reaction Endonucleolytic cleavage to 5'-phosphomonoester.. In terms of biological role, endonuclease that specifically degrades the RNA of RNA-DNA hybrids. The polypeptide is Ribonuclease H (Photorhabdus luminescens (Xenorhabdus luminescens)).